Reading from the N-terminus, the 693-residue chain is DNA ligase (693 aa).

Residues 35–39, 84–85, and Glu121 contribute to the NAD(+) site; these read DAEYD and SI. Lys123 acts as the N6-AMP-lysine intermediate in catalysis. NAD(+) is bound by residues Arg144, Glu180, Lys297, and Lys321. Positions 418, 421, 436, and 442 each coordinate Zn(2+). Residues 601–690 form the BRCT domain; it reads PASGSVAGLT…EQSPINNKDG (90 aa).

Belongs to the NAD-dependent DNA ligase family. LigA subfamily. Mg(2+) is required as a cofactor. Mn(2+) serves as cofactor.

The catalysed reaction is NAD(+) + (deoxyribonucleotide)n-3'-hydroxyl + 5'-phospho-(deoxyribonucleotide)m = (deoxyribonucleotide)n+m + AMP + beta-nicotinamide D-nucleotide.. Functionally, DNA ligase that catalyzes the formation of phosphodiester linkages between 5'-phosphoryl and 3'-hydroxyl groups in double-stranded DNA using NAD as a coenzyme and as the energy source for the reaction. It is essential for DNA replication and repair of damaged DNA. This chain is DNA ligase, found in Azoarcus sp. (strain BH72).